The primary structure comprises 37 residues: Desulforedoxin (37 aa).

The Fe cation site is built by C10, C13, C29, and C30.

To the N-terminal section of desulfoferrodoxin. In terms of assembly, homodimer. It depends on Fe cation as a cofactor.

Functionally, nonheme iron protein possibly involved in electron transport. The chain is Desulforedoxin (dsr) from Megalodesulfovibrio gigas (Desulfovibrio gigas).